The following is a 457-amino-acid chain: UDP-glycosyltransferase 74C1 (457 aa).

Residues Thr-281, 336–338, 353–361, and 375–378 each bind UDP-alpha-D-glucose; these read VPQ, HCGWNSTLE, and WTDQ.

This sequence belongs to the UDP-glycosyltransferase family.

In Arabidopsis thaliana (Mouse-ear cress), this protein is UDP-glycosyltransferase 74C1 (UGT74C1).